A 598-amino-acid chain; its full sequence is Pantothenate kinase 1 (598 aa).

Residues alanine 32–alanine 161 are disordered. Positions glycine 38–cysteine 49 are enriched in gly residues. Serine 215 carries the phosphoserine modification. The Nucleolar localization signal motif lies at lysine 218–proline 235. Residue glutamate 363 is the Proton acceptor of the active site. Acetyl-CoA-binding residues include serine 417, serine 420, and arginine 432.

Belongs to the type II pantothenate kinase family. Homodimer. Expressed at high levels in brain, heart, kidney, liver, skeletal muscle and testis. As to expression, detected at much lower levels in kidney, liver, brain and testis and not detected in heart or skeletal muscle.

The protein resides in the cytoplasm. Its subcellular location is the nucleus. It is found in the nucleolus. It localises to the cytosol. The protein localises to the cytoplasmic vesicle. The protein resides in the clathrin-coated vesicle. Its subcellular location is the recycling endosome. It carries out the reaction (R)-pantothenate + ATP = (R)-4'-phosphopantothenate + ADP + H(+). The protein operates within cofactor biosynthesis; coenzyme A biosynthesis; CoA from (R)-pantothenate: step 1/5. Regulated by feedback inhibition by CoA and its thioesters. Functionally, catalyzes the phosphorylation of pantothenate to generate 4'-phosphopantothenate in the first and rate-determining step of coenzyme A (CoA) synthesis. This is Pantothenate kinase 1 (PANK1) from Homo sapiens (Human).